The following is a 115-amino-acid chain: Large ribosomal subunit protein uL22 (115 aa).

Belongs to the universal ribosomal protein uL22 family. As to quaternary structure, part of the 50S ribosomal subunit.

Its function is as follows. This protein binds specifically to 23S rRNA; its binding is stimulated by other ribosomal proteins, e.g. L4, L17, and L20. It is important during the early stages of 50S assembly. It makes multiple contacts with different domains of the 23S rRNA in the assembled 50S subunit and ribosome. In terms of biological role, the globular domain of the protein is located near the polypeptide exit tunnel on the outside of the subunit, while an extended beta-hairpin is found that lines the wall of the exit tunnel in the center of the 70S ribosome. The chain is Large ribosomal subunit protein uL22 from Limosilactobacillus fermentum (strain NBRC 3956 / LMG 18251) (Lactobacillus fermentum).